The primary structure comprises 98 residues: Large ribosomal subunit protein uL23 (98 aa).

Belongs to the universal ribosomal protein uL23 family. In terms of assembly, part of the 50S ribosomal subunit. Contacts protein L29, and trigger factor when it is bound to the ribosome.

Functionally, one of the early assembly proteins it binds 23S rRNA. One of the proteins that surrounds the polypeptide exit tunnel on the outside of the ribosome. Forms the main docking site for trigger factor binding to the ribosome. The chain is Large ribosomal subunit protein uL23 from Methylobacterium nodulans (strain LMG 21967 / CNCM I-2342 / ORS 2060).